Reading from the N-terminus, the 473-residue chain is Photosystem II CP43 reaction center protein (473 aa).

Residues 1 to 14 (MKILYSLRRFYHVE) constitute a propeptide that is removed on maturation. The residue at position 15 (T15) is an N-acetylthreonine. At T15 the chain carries Phosphothreonine. 5 helical membrane passes run 69–93 (LFEVAHFVPEKPMYEQGLILLPHLA), 134–155 (LLGPETLEESFPFFGYVWKDRN), 178–200 (KALYFGGVYDTWAPGGGDVRKIT), 255–275 (KPFAWARRAFVWSGEAYLSYS), and 291–312 (WFNNTAYSSEFYGPTGPEASQA). E367 lines the [CaMn4O5] cluster pocket. A helical transmembrane segment spans residues 447–471 (RARAAAAGFEKGIDRDLEPVLYMNP).

The protein belongs to the PsbB/PsbC family. PsbC subfamily. As to quaternary structure, PSII is composed of 1 copy each of membrane proteins PsbA, PsbB, PsbC, PsbD, PsbE, PsbF, PsbH, PsbI, PsbJ, PsbK, PsbL, PsbM, PsbT, PsbX, PsbY, PsbZ, Psb30/Ycf12, at least 3 peripheral proteins of the oxygen-evolving complex and a large number of cofactors. It forms dimeric complexes. It depends on Binds multiple chlorophylls and provides some of the ligands for the Ca-4Mn-5O cluster of the oxygen-evolving complex. It may also provide a ligand for a Cl- that is required for oxygen evolution. PSII binds additional chlorophylls, carotenoids and specific lipids. as a cofactor. Phosphorylated on threonine residue(s); phosphorylation increases with increasing light levels.

Its subcellular location is the plastid. The protein localises to the chloroplast thylakoid membrane. Functionally, one of the components of the core complex of photosystem II (PSII). It binds chlorophyll and helps catalyze the primary light-induced photochemical processes of PSII. PSII is a light-driven water:plastoquinone oxidoreductase, using light energy to abstract electrons from H(2)O, generating O(2) and a proton gradient subsequently used for ATP formation. This is Photosystem II CP43 reaction center protein from Secale cereale (Rye).